Here is a 358-residue protein sequence, read N- to C-terminus: Peptide chain release factor 1 (358 aa).

The residue at position 233 (Gln233) is an N5-methylglutamine. The span at 282–306 shows a compositional bias: basic and acidic residues; it reads QRAASERSADRRGQVGSGDRSERVR. Positions 282-308 are disordered; the sequence is QRAASERSADRRGQVGSGDRSERVRTY.

The protein belongs to the prokaryotic/mitochondrial release factor family. Post-translationally, methylated by PrmC. Methylation increases the termination efficiency of RF1.

The protein resides in the cytoplasm. In terms of biological role, peptide chain release factor 1 directs the termination of translation in response to the peptide chain termination codons UAG and UAA. This is Peptide chain release factor 1 from Afipia carboxidovorans (strain ATCC 49405 / DSM 1227 / KCTC 32145 / OM5) (Oligotropha carboxidovorans).